Here is a 488-residue protein sequence, read N- to C-terminus: Receptor-like tyrosine-protein kinase kin-15 (488 aa).

The signal sequence occupies residues Met1–Ser26. Asn25 is a glycosylation site (N-linked (GlcNAc...) asparagine). Residues Thr27–Met50 lie on the Extracellular side of the membrane. Residues Phe51–Leu70 form a helical membrane-spanning segment. Residues Ser71–Asp488 lie on the Cytoplasmic side of the membrane. The 315-residue stretch at Glu144–Val458 folds into the Protein kinase domain. ATP-binding positions include Leu150–Val158 and Lys183. The Proton acceptor role is filled by Asp319.

It belongs to the protein kinase superfamily. Tyr protein kinase family. In terms of tissue distribution, hypodermal cells.

The protein resides in the cell membrane. It catalyses the reaction L-tyrosyl-[protein] + ATP = O-phospho-L-tyrosyl-[protein] + ADP + H(+). May be specifically involved in cell-cell interactions regulating cell fusions that generate the hypodermis during postembryonic development. It has a role in the development of the HYP7 hypodermal syncytium. This chain is Receptor-like tyrosine-protein kinase kin-15 (kin-15), found in Caenorhabditis elegans.